Here is a 75-residue protein sequence, read N- to C-terminus: SPbeta prophage-derived uncharacterized protein YomT (75 aa).

The chain is SPbeta prophage-derived uncharacterized protein YomT (yomT) from Bacillus subtilis (strain 168).